A 315-amino-acid polypeptide reads, in one-letter code: Cytochrome f (315 aa).

A signal peptide spans 1-36 (MKQSLLSVLTKKSLRLLAALFLVVTSVFSLPQAAQA). Residues phenylalanine 37, cysteine 57, cysteine 60, and histidine 61 each contribute to the heme site. Residues 281-301 (IKWLMVFFSAIMISQTLLVLK) form a helical membrane-spanning segment.

Belongs to the cytochrome f family. As to quaternary structure, the 4 large subunits of the cytochrome b6-f complex are cytochrome b6, subunit IV (17 kDa polypeptide, PetD), cytochrome f and the Rieske protein, while the 4 small subunits are PetG, PetL, PetM and PetN. The complex functions as a dimer. Heme is required as a cofactor.

The protein localises to the cellular thylakoid membrane. Functionally, component of the cytochrome b6-f complex, which mediates electron transfer between photosystem II (PSII) and photosystem I (PSI), cyclic electron flow around PSI, and state transitions. This Acaryochloris marina (strain MBIC 11017) protein is Cytochrome f.